We begin with the raw amino-acid sequence, 176 residues long: Transcriptional repressor NrdR (176 aa).

The segment at 3 to 34 (CPYCGSLETQVKDSRPTDDASAIRRRRVCPDC) is a zinc-finger region. Residues 49–139 (LTVLKKSGRR…VYRNFREARD (91 aa)) form the ATP-cone domain. Positions 147–176 (LDGAAQPEAPSKDDGGTDEPPAKTRAPTRA) are disordered.

The protein belongs to the NrdR family. The cofactor is Zn(2+).

Negatively regulates transcription of bacterial ribonucleotide reductase nrd genes and operons by binding to NrdR-boxes. This is Transcriptional repressor NrdR from Methylocella silvestris (strain DSM 15510 / CIP 108128 / LMG 27833 / NCIMB 13906 / BL2).